The following is a 487-amino-acid chain: Betaine aldehyde dehydrogenase (487 aa).

K(+)-binding residues include Ser-26 and Asp-93. Residue 150–152 coordinates NAD(+); it reads GAW. Lys-162 serves as the catalytic Charge relay system. NAD(+) is bound by residues 176–179 and 229–232; these read KPSE and SVPT. Residue Leu-244 participates in K(+) binding. The active-site Proton acceptor is Glu-250. 3 residues coordinate NAD(+): Gly-252, Cys-284, and Glu-384. Cys-284 serves as the catalytic Nucleophile. A Cysteine sulfenic acid (-SOH) modification is found at Cys-284. The K(+) site is built by Lys-454 and Gly-457. Catalysis depends on Glu-461, which acts as the Charge relay system.

This sequence belongs to the aldehyde dehydrogenase family. In terms of assembly, dimer of dimers. The cofactor is K(+).

The catalysed reaction is betaine aldehyde + NAD(+) + H2O = glycine betaine + NADH + 2 H(+). Its pathway is amine and polyamine biosynthesis; betaine biosynthesis via choline pathway; betaine from betaine aldehyde: step 1/1. Its function is as follows. Involved in the biosynthesis of the osmoprotectant glycine betaine. Catalyzes the irreversible oxidation of betaine aldehyde to the corresponding acid. This is Betaine aldehyde dehydrogenase from Rhizobium etli (strain CIAT 652).